The sequence spans 118 residues: Large ribosomal subunit protein bL17 (118 aa).

Belongs to the bacterial ribosomal protein bL17 family. In terms of assembly, part of the 50S ribosomal subunit. Contacts protein L32.

This is Large ribosomal subunit protein bL17 from Campylobacter fetus subsp. fetus (strain 82-40).